The following is a 514-amino-acid chain: Endogenous retrovirus group PABLB member 1 Env polyprotein (514 aa).

The N-linked (GlcNAc...) asparagine glycan is linked to Asn58. The surface protein stretch occupies residues 60-316 (STSNVFLQWA…YPYLPHVVNQ (257 aa)). The CXXC signature appears at 82–85 (CWVC). 6 N-linked (GlcNAc...) asparagine glycosylation sites follow: Asn133, Asn140, Asn155, Asn218, Asn226, and Asn267. The tract at residues 317–514 (GTRAIVHRND…QRDIFHSNAP (198 aa)) is transmembrane protein. A fusion peptide region spans residues 328–348 (LPTIFMPSVGLGTVIQHIEAL). N-linked (GlcNAc...) asparagine glycans are attached at residues Asn350 and Asn357. Positions 378–394 (LQNRMALDILTAAEGGT) match the CKS-17 motif. A disulfide bridge connects residues Cys395 and Cys402. The short motif at 395-403 (CALIKTECC) is the CX6CC element. N-linked (GlcNAc...) asparagine glycans are attached at residues Asn408 and Asn412. Residues 452 to 472 (ILIVLATLWSVGIALCCGLYF) form a helical membrane-spanning segment.

It belongs to the gamma type-C retroviral envelope protein family. HERV class-I R(b) env subfamily. In terms of processing, the CXXC motif is highly conserved across a broad range of retroviral envelope proteins. It is thought to participate in the formation of a labile disulfide bond possibly with the CX6CC motif present in the transmembrane domain. As to expression, low expression in placenta and testis.

The protein resides in the cell membrane. In terms of biological role, retroviral envelope proteins mediate receptor recognition and membrane fusion during early infection. Endogenous envelope proteins may have kept, lost or modified their original function during evolution. This endogenous envelope protein has lost its original fusogenic properties. This Homo sapiens (Human) protein is Endogenous retrovirus group PABLB member 1 Env polyprotein (ERVPABLB-1).